A 531-amino-acid chain; its full sequence is Isocitrate lyase (531 aa).

101–103 contributes to the substrate binding site; the sequence is SGW. Asp184 is a binding site for Mg(2+). Cys222 serves as the catalytic Proton acceptor. Residues 223 to 224, 380 to 384, and Thr451 each bind substrate; these read GH and NNSPS.

Belongs to the isocitrate lyase/PEP mutase superfamily. Isocitrate lyase family. In terms of assembly, homotetramer. Mg(2+) serves as cofactor.

It carries out the reaction D-threo-isocitrate = glyoxylate + succinate. Its pathway is carbohydrate metabolism; glyoxylate cycle; (S)-malate from isocitrate: step 1/2. Involved in the metabolic adaptation in response to environmental changes. Catalyzes the reversible formation of succinate and glyoxylate from isocitrate, a key step of the glyoxylate cycle, which operates as an anaplerotic route for replenishing the tricarboxylic acid cycle during growth on fatty acid substrates. The sequence is that of Isocitrate lyase from Pseudomonas aeruginosa (strain ATCC 15692 / DSM 22644 / CIP 104116 / JCM 14847 / LMG 12228 / 1C / PRS 101 / PAO1).